Reading from the N-terminus, the 205-residue chain is Guanylate kinase (205 aa).

The region spanning 19 to 197 is the Guanylate kinase-like domain; that stretch reads PKLFTISAPA…AYRVLKSIFI (179 aa). 26–33 contacts ATP; sequence APAGVGKT.

Belongs to the guanylate kinase family.

The protein localises to the cytoplasm. The catalysed reaction is GMP + ATP = GDP + ADP. Functionally, essential for recycling GMP and indirectly, cGMP. This is Guanylate kinase (gmk) from Chlamydia pneumoniae (Chlamydophila pneumoniae).